The sequence spans 105 residues: Cell division protein FtsB (105 aa).

Residues 1 to 3 lie on the Cytoplasmic side of the membrane; the sequence is MGK. The helical transmembrane segment at 4 to 21 threads the bilayer; the sequence is LTLLLLALLVWLQYSLWF. Residues 22-105 lie on the Periplasmic side of the membrane; sequence GKNGLHDYTR…QASGQQQNNR (84 aa). The stretch at 33-62 forms a coiled coil; that stretch reads NDDVTAQQATNAKLKARNDQLFAEIDDLNG.

It belongs to the FtsB family. In terms of assembly, part of a complex composed of FtsB, FtsL and FtsQ.

The protein localises to the cell inner membrane. Essential cell division protein. May link together the upstream cell division proteins, which are predominantly cytoplasmic, with the downstream cell division proteins, which are predominantly periplasmic. The chain is Cell division protein FtsB from Klebsiella aerogenes (Enterobacter aerogenes).